Reading from the N-terminus, the 363-residue chain is Cytochrome P450 CYP82D47 (363 aa).

Position 342 (Cys-342) interacts with heme.

Belongs to the cytochrome P450 family. Requires heme as cofactor.

In terms of biological role, probable heme-thiolate monooxygenase. The protein is Cytochrome P450 CYP82D47 of Panax ginseng (Korean ginseng).